The primary structure comprises 378 residues: Cytochrome b (378 aa).

4 helical membrane passes run 34-54 (FGSL…FLAM), 78-99 (WLLR…YLHV), 114-134 (WLIG…GYVL), and 179-199 (FFTF…IHLL). His-84 and His-98 together coordinate heme b. 2 residues coordinate heme b: His-183 and His-197. His-202 is an a ubiquinone binding site. Transmembrane regions (helical) follow at residues 227-247 (FKDI…VLIS), 289-309 (LGGV…PFYN), 321-341 (INQV…WIGA), and 348-368 (YVLI…VNPL).

Belongs to the cytochrome b family. The main subunits of complex b-c1 are: cytochrome b, cytochrome c1 and the Rieske protein. Heme b serves as cofactor.

The protein localises to the mitochondrion inner membrane. Component of the ubiquinol-cytochrome c reductase complex (complex III or cytochrome b-c1 complex) that is part of the mitochondrial respiratory chain. The b-c1 complex mediates electron transfer from ubiquinol to cytochrome c. Contributes to the generation of a proton gradient across the mitochondrial membrane that is then used for ATP synthesis. The protein is Cytochrome b (mt:Cyt-b) of Drosophila mauritiana (Fruit fly).